Consider the following 685-residue polypeptide: Tripartite terminase subunit 1 (685 aa).

The segment at 173 to 201 adopts a C3H1-type zinc-finger fold; the sequence is CWRCVGELMVLPNHGNPSTAEGTHVSCNH. Disordered regions lie at residues 231-254 and 394-423; these read EEKA…EAEG and LGRG…SGAL. A compositionally biased stretch (basic and acidic residues) spans 395-407; the sequence is GRGEEEASRESPE. 619–626 lines the ATP pocket; it reads YNKTWGRS.

This sequence belongs to the herpesviridae TRM1 protein family. As to quaternary structure, associates with TRM2 and TRM3 to form the tripartite terminase complex. Interacts with portal protein.

Its subcellular location is the host nucleus. In terms of biological role, component of the molecular motor that translocates viral genomic DNA in empty capsid during DNA packaging. Forms a tripartite terminase complex together with TRM2 and TRM3 in the host cytoplasm. Once the complex reaches the host nucleus, it interacts with the capsid portal vertex. This portal forms a ring in which genomic DNA is translocated into the capsid. TRM1 carries an endonuclease activity that plays an important role for the cleavage of concatemeric viral DNA into unit length genomes. The polypeptide is Tripartite terminase subunit 1 (Epstein-Barr virus (strain B95-8) (HHV-4)).